We begin with the raw amino-acid sequence, 178 residues long: Oligoribonuclease (178 aa).

Residues 7–168 enclose the Exonuclease domain; the sequence is LIWIDLEMTG…DDIRESIAEL (162 aa). Tyr128 is a catalytic residue.

Belongs to the oligoribonuclease family.

It is found in the cytoplasm. Its function is as follows. 3'-to-5' exoribonuclease specific for small oligoribonucleotides. The protein is Oligoribonuclease of Francisella tularensis subsp. novicida (strain U112).